The following is a 643-amino-acid chain: E3 ubiquitin-protein ligase AMFR (643 aa).

6 consecutive transmembrane segments (helical) span residues 82 to 102 (LFVWVLVNTACCVLMLVAKLI), 122 to 142 (FWNFIFYKFIFIFGVLNVQTV), 186 to 206 (VLSLLIAMLLSCCGLAVVCCV), 215 to 235 (TLAFMAAESLLVTVRTAHVIL), 254 to 274 (GTYVYYTDFVMELALLSLDLM), and 276 to 296 (HIHMLLFGNIWLSMASLVIFM). The RING-type zinc finger occupies 341-379 (CAICWDSMQAARKLPCGHLFHNSCLRSWLEQDTSCPTCR). Residues 429–449 (IASWLPSFSVEVMHTTNILGI) form a helical membrane-spanning segment. The region spanning 456–498 (QLNAMAHQIQEMFPQVPYHLVLQDLQMTRSVEITTDNILEGRI) is the CUE domain. Positions 504–535 (TQRSDSLRPALNSPVERPSPDLEEGEASVQTE) are disordered. Phosphoserine occurs at positions 516 and 542. The tract at residues 598-624 (LNKSSEDDGASERLLPSEGTSSDPVTL) is disordered. Residues 622–640 (VTLRRRMLAAAAERRLQRQ) form a VCP/p97-interacting motif (VIM) region.

In terms of assembly, interacts with RNF5. Also forms an ERAD complex containing VCP/p97, NGLY1; PSMC1; SAKS1 and RAD23B required for coupling retrotranslocation, ubiquitination and deglycosylation. Interacts with DERL1. Interacts (through a region distinct from the RING finger) with UBE2G2/UBC7. Component of the VCP/p97-AMFR/gp78 complex that enhances VCP/p97 binding to polyubiquitinated proteins for their degradation by the endoplasmic reticulum-associated degradation (ERAD) pathway. Interacts (via the VIM) with VCP/p97. Interacts (via its membrane domain) with INSIG1; the interaction initiates the sterol-mediated ubiquitination and degradation of HMGCR by the ERAD pathway. Interacts with AUP1, UBE2G2 and RNF139/TRC8; interaction with AUP1 facilitates interaction of AMFR with ubiquitin-conjugating enzyme UBE2G2 and ubiquitin ligase RNF139, leading to sterol-induced ubiquitination of HNGCR and its subsequent proteasomal degradation. Interacts with BAG6. Interacts with USP13 (via UBA 2 domain); the interaction is direct. Interacts with LMBR1L, UBAC2 and CTNNB1. Interacts with C18orf32. Post-translationally, palmitoylation of the RING-type zing finger by ZDHHC6 promotes localization to the peripheral endoplasmic reticulum. As to expression, expressed in heart, brain, liver, lung, skeletal muscle, kidney and testis. Not detected in spleen.

The protein localises to the endoplasmic reticulum membrane. It carries out the reaction [E2 ubiquitin-conjugating enzyme]-S-ubiquitinyl-L-cysteine + [acceptor protein]-L-cysteine = [E2 ubiquitin-conjugating enzyme]-L-cysteine + [acceptor protein]-S-ubiquitinyl-L-cysteine.. It functions in the pathway protein modification; protein ubiquitination. Its function is as follows. E3 ubiquitin-protein ligase that mediates the polyubiquitination of lysine and cysteine residues on target proteins, such as CD3D, CYP3A4, CFTR, INSIG1, SOAT2/ACAT2 and APOB for proteasomal degradation. Component of a VCP/p97-AMFR/gp78 complex that participates in the final step of endoplasmic reticulum-associated degradation (ERAD). The VCP/p97-AMFR/gp78 complex is involved in the sterol-accelerated ERAD degradation of HMGCR through binding to the HMGCR-INSIG1 complex at the ER membrane. In addition, interaction of AMFR with AUP1 facilitates interaction of AMFR with ubiquitin-conjugating enzyme UBE2G2 and ubiquitin ligase RNF139, leading to sterol-induced HMGCR ubiquitination. The ubiquitinated HMGCR is then released from the ER by the complex into the cytosol for subsequent destruction. In addition to ubiquitination on lysine residues, catalyzes ubiquitination on cysteine residues: together with INSIG1, mediates polyubiquitination of SOAT2/ACAT2 at 'Cys-277', leading to its degradation when the lipid levels are low. Catalyzes ubiquitination and subsequent degradation of INSIG1 when cells are depleted of sterols. Mediates polyubiquitination of INSIG2 at 'Cys-215' in some tissues, leading to its degradation. Also regulates ERAD through the ubiquitination of UBL4A a component of the BAG6/BAT3 complex. Also acts as a scaffold protein to assemble a complex that couples ubiquitination, retranslocation and deglycosylation. Mediates tumor invasion and metastasis as a receptor for the GPI/autocrine motility factor. In association with LMBR1L and UBAC2, negatively regulates the canonical Wnt signaling pathway in the lymphocytes by promoting the ubiquitin-mediated degradation of CTNNB1 and Wnt receptors FZD6 and LRP6. Regulates NF-kappa-B and MAPK signaling pathways by mediating 'Lys-27'-linked polyubiquitination of TAB3 and promoting subsequent TAK1/MAP3K7 activation. The chain is E3 ubiquitin-protein ligase AMFR (Amfr) from Mus musculus (Mouse).